Reading from the N-terminus, the 755-residue chain is Xaa-Pro dipeptidyl-peptidase (755 aa).

Active-site charge relay system residues include S348, D468, and H498.

This sequence belongs to the peptidase S15 family. As to quaternary structure, homodimer.

It localises to the cytoplasm. The catalysed reaction is Hydrolyzes Xaa-Pro-|- bonds to release unblocked, N-terminal dipeptides from substrates including Ala-Pro-|-p-nitroanilide and (sequentially) Tyr-Pro-|-Phe-Pro-|-Gly-Pro-|-Ile.. Functionally, removes N-terminal dipeptides sequentially from polypeptides having unsubstituted N-termini provided that the penultimate residue is proline. This chain is Xaa-Pro dipeptidyl-peptidase, found in Streptococcus thermophilus (strain CNRZ 1066).